A 125-amino-acid chain; its full sequence is Fluoride-specific ion channel FluC (125 aa).

A run of 4 helical transmembrane segments spans residues 4 to 24 (WLFV…ISEL), 35 to 55 (YGTL…FALI), 69 to 89 (LMVG…DTVV), and 103 to 123 (MGLN…LVAS). 2 residues coordinate Na(+): Gly-75 and Thr-78.

Belongs to the fluoride channel Fluc/FEX (TC 1.A.43) family.

The protein resides in the cell inner membrane. The catalysed reaction is fluoride(in) = fluoride(out). Na(+) is not transported, but it plays an essential structural role and its presence is essential for fluoride channel function. Its function is as follows. Fluoride-specific ion channel. Important for reducing fluoride concentration in the cell, thus reducing its toxicity. This chain is Fluoride-specific ion channel FluC, found in Aeromonas salmonicida (strain A449).